A 199-amino-acid polypeptide reads, in one-letter code: Protein GrpE (199 aa).

Positions 1-24 are enriched in basic and acidic residues; the sequence is MSKQNKKDWKKFKDEHKEEHKVEN. Positions 1-47 are disordered; the sequence is MSKQNKKDWKKFKDEHKEEHKVENEILEEEIDEKSQHQEPALGHPSY.

It belongs to the GrpE family. Homodimer.

It is found in the cytoplasm. In terms of biological role, participates actively in the response to hyperosmotic and heat shock by preventing the aggregation of stress-denatured proteins, in association with DnaK and GrpE. It is the nucleotide exchange factor for DnaK and may function as a thermosensor. Unfolded proteins bind initially to DnaJ; upon interaction with the DnaJ-bound protein, DnaK hydrolyzes its bound ATP, resulting in the formation of a stable complex. GrpE releases ADP from DnaK; ATP binding to DnaK triggers the release of the substrate protein, thus completing the reaction cycle. Several rounds of ATP-dependent interactions between DnaJ, DnaK and GrpE are required for fully efficient folding. This is Protein GrpE from Legionella pneumophila (strain Paris).